The chain runs to 117 residues: Large ribosomal subunit protein bL19 (117 aa).

Belongs to the bacterial ribosomal protein bL19 family.

In terms of biological role, this protein is located at the 30S-50S ribosomal subunit interface and may play a role in the structure and function of the aminoacyl-tRNA binding site. This is Large ribosomal subunit protein bL19 from Bacteroides thetaiotaomicron (strain ATCC 29148 / DSM 2079 / JCM 5827 / CCUG 10774 / NCTC 10582 / VPI-5482 / E50).